The following is a 239-amino-acid chain: Ribonuclease 3 (239 aa).

In terms of domain architecture, RNase III spans 11 to 133 (HTAIQKKLGY…MFAAVSFDAD (123 aa)). Glu46 serves as a coordination point for Mg(2+). The active site involves Asp50. The Mg(2+) site is built by Asp119 and Glu122. Residue Glu122 is part of the active site. The 71-residue stretch at 160–230 (DGKTALQEAL…AKEALKWLEE (71 aa)) folds into the DRBM domain.

Belongs to the ribonuclease III family. In terms of assembly, homodimer. Mg(2+) is required as a cofactor.

Its subcellular location is the cytoplasm. The catalysed reaction is Endonucleolytic cleavage to 5'-phosphomonoester.. In terms of biological role, digests double-stranded RNA. Involved in the processing of primary rRNA transcript to yield the immediate precursors to the large and small rRNAs (23S and 16S). Processes some mRNAs, and tRNAs when they are encoded in the rRNA operon. Processes pre-crRNA and tracrRNA of type II CRISPR loci if present in the organism. This is Ribonuclease 3 from Neisseria gonorrhoeae (strain NCCP11945).